Here is a 1838-residue protein sequence, read N- to C-terminus: Type III effector DspE (1838 aa).

Residues 1 to 12 (MELKSLGTEHKA) show a composition bias toward basic and acidic residues. 6 disordered regions span residues 1 to 72 (MELK…AAHQ), 86 to 163 (KKFS…PTQQ), 182 to 264 (MAHP…VATP), 281 to 300 (LEGT…LKGS), 398 to 418 (DGKS…KTML), and 1480 to 1505 (NLAA…SNNR). A compositionally biased stretch (low complexity) spans 27–46 (ALQQGSSSSSPQNAAASLAA). Over residues 91–103 (SAPQGQPGTTHSK) the composition is skewed to polar residues. Basic and acidic residues predominate over residues 110–120 (LLARDDGETQH). Positions 407-418 (GSGTQSHNKTML) are enriched in polar residues. The segment covering 1480–1502 (NLAAGSRERSTTSGQFGSTTSAS) has biased composition (low complexity).

It belongs to the AvrE family. Interacts with the chaperone DspF (DspB/F).

The protein localises to the secreted. It localises to the host cell. Polyamidoamine dendrimers inhibit channel and virulence activities. Functionally, major virulence factor that may function as a water- and solute-permeable channel dedicated to creating osmotic/water potential perturbation and a water- and nutrient-rich apoplast in which bacteria multiply within the infected plant tissues. Expression in Xenopus oocytes results in inward and outward currents, permeability to water and osmolarity-dependent oocyte swelling and bursting. In terms of biological role, acts as a major cell-death inducer during fire blight, a necrotic disease affecting plants of the rosaceous family, and during hypersensitive response (HR) on non-host plants. Essential for pathogenicity on host plants. Contributes quantitatively and in a strain-dependent fashion to HR elicitation in non-host plants such as tobacco. Induces cell death in leaves of apple, a host plant, and tobacco, a non-host plant. Also triggers necrosis in the widely used model, non-host, N.benthamiana and in yeast. Required for the transient multiplication and survival of E.amylovora in non-host A.thaliana leaves. In A.thaliana, triggers electrolyte leakage, activation of defense pathways, reactive oxygen species (ROS) accumulation and cell death. The toxicity of DspE in A.thaliana is associated with an early repression of de novo protein synthesis. This chain is Type III effector DspE, found in Erwinia amylovora (Fire blight bacteria).